A 215-amino-acid polypeptide reads, in one-letter code: Peroxiredoxin (215 aa).

Residues 6 to 161 enclose the Thioredoxin domain; it reads PLIGEEFPRV…ILRAVKALQT (156 aa). The Cysteine sulfenic acid (-SOH) intermediate role is filled by C48. R124 contributes to the substrate binding site. C205 and C211 are oxidised to a cystine.

Belongs to the peroxiredoxin family. Prx6 subfamily. Homodecamer. Pentamer of dimers that assemble into a ring structure.

Its subcellular location is the cytoplasm. The enzyme catalyses a hydroperoxide + [thioredoxin]-dithiol = an alcohol + [thioredoxin]-disulfide + H2O. Its function is as follows. Thiol-specific peroxidase that catalyzes the reduction of hydrogen peroxide and organic hydroperoxides to water and alcohols, respectively. Plays a role in cell protection against oxidative stress by detoxifying peroxides. The protein is Peroxiredoxin of Thermotoga maritima (strain ATCC 43589 / DSM 3109 / JCM 10099 / NBRC 100826 / MSB8).